The following is a 245-amino-acid chain: Type II restriction enzyme EcoRV (245 aa).

The Mg(2+) site is built by glutamate 45, aspartate 74, and aspartate 90. Active-site residues include aspartate 74, aspartate 90, and lysine 92.

Homodimer. It depends on Mg(2+) as a cofactor.

The enzyme catalyses Endonucleolytic cleavage of DNA to give specific double-stranded fragments with terminal 5'-phosphates.. Its function is as follows. A P subtype restriction enzyme that recognizes the double-stranded sequence 5'-GATATC-3' and cleaves after T-3. This chain is Type II restriction enzyme EcoRV (ecoRVR), found in Escherichia coli.